The chain runs to 152 residues: D-aminoacyl-tRNA deacylase (152 aa).

A Gly-cisPro motif, important for rejection of L-amino acids motif is present at residues 142–143 (GP).

It belongs to the DTD family. As to quaternary structure, homodimer.

The protein localises to the cytoplasm. The catalysed reaction is glycyl-tRNA(Ala) + H2O = tRNA(Ala) + glycine + H(+). The enzyme catalyses a D-aminoacyl-tRNA + H2O = a tRNA + a D-alpha-amino acid + H(+). In terms of biological role, an aminoacyl-tRNA editing enzyme that deacylates mischarged D-aminoacyl-tRNAs. Also deacylates mischarged glycyl-tRNA(Ala), protecting cells against glycine mischarging by AlaRS. Acts via tRNA-based rather than protein-based catalysis; rejects L-amino acids rather than detecting D-amino acids in the active site. By recycling D-aminoacyl-tRNA to D-amino acids and free tRNA molecules, this enzyme counteracts the toxicity associated with the formation of D-aminoacyl-tRNA entities in vivo and helps enforce protein L-homochirality. The polypeptide is D-aminoacyl-tRNA deacylase (Paraburkholderia phytofirmans (strain DSM 17436 / LMG 22146 / PsJN) (Burkholderia phytofirmans)).